Consider the following 206-residue polypeptide: Outer-membrane lipoprotein carrier protein (206 aa).

Positions 1–20 are cleaved as a signal peptide; it reads MFYLIKKLPKFILFSLYLYA.

It belongs to the LolA family. Monomer.

It localises to the periplasm. Its function is as follows. Participates in the translocation of lipoproteins from the inner membrane to the outer membrane. Only forms a complex with a lipoprotein if the residue after the N-terminal Cys is not an aspartate (The Asp acts as a targeting signal to indicate that the lipoprotein should stay in the inner membrane). In Wigglesworthia glossinidia brevipalpis, this protein is Outer-membrane lipoprotein carrier protein.